The following is a 462-amino-acid chain: Elongation factor 1-alpha 1 (462 aa).

The residue at position 2 (Gly-2) is a N,N,N-trimethylglycine. Residues 5-242 (KTHINIVVIG…DCILPPTRPT (238 aa)) enclose the tr-type G domain. The interval 14 to 21 (GHVDSGKS) is G1. 14-21 (GHVDSGKS) lines the GTP pocket. Lys-36 bears the N6,N6,N6-trimethyllysine; alternate mark. N6,N6-dimethyllysine; alternate is present on Lys-36. Residue Lys-36 is modified to N6-methyllysine; alternate. The residue at position 55 (Lys-55) is an N6,N6-dimethyllysine. A G2 region spans residues 70 to 74 (GITID). Lys-79 is modified (N6,N6,N6-trimethyllysine; by EEF1AKMT1). Positions 91–94 (DAPG) are G3. 153-156 (NKMD) serves as a coordination point for GTP. Residues 153–156 (NKMD) form a G4 region. N6,N6,N6-trimethyllysine; alternate; by EEF1AKMT3 is present on Lys-165. At Lys-165 the chain carries N6,N6-dimethyllysine; alternate; by EEF1AKMT3. At Lys-165 the chain carries N6-acetyllysine; alternate. At Lys-165 the chain carries N6-methyllysine; alternate; by EEF1AKMT3. N6-acetyllysine is present on Lys-172. 194–196 (SGW) is a binding site for GTP. The segment at 194-196 (SGW) is G5. An N6-acetyllysine modification is found at Lys-273. Ser-300 is subject to Phosphoserine; by TGFBR1. Glu-301 bears the 5-glutamyl glycerylphosphorylethanolamine mark. Position 318 is an N6,N6,N6-trimethyllysine; by EEF1AKMT2 (Lys-318). Glu-374 carries the post-translational modification 5-glutamyl glycerylphosphorylethanolamine. Lys-385 participates in a covalent cross-link: Glycyl lysine isopeptide (Lys-Gly) (interchain with G-Cter in ubiquitin). An N6-acetyllysine; alternate modification is found at Lys-392. Lys-392 is modified (N6-succinyllysine; alternate). Thr-432 carries the phosphothreonine; by PASK modification. N6-acetyllysine is present on Lys-439.

It belongs to the TRAFAC class translation factor GTPase superfamily. Classic translation factor GTPase family. EF-Tu/EF-1A subfamily. In terms of assembly, found in a nuclear export complex with XPO5, EEF1A1, Ran and aminoacylated tRNA. Interacts with PARP1 and TXK. Interacts with KARS1. May interact with ERGIC2. Interacts with IFIT1 (via TPR repeats 4-7). Interacts with DLC1, facilitating distribution to the membrane periphery and ruffles upon growth factor stimulation. Interacts with ZPR1; the interaction occurs in a epidermal growth factor (EGF)-dependent manner. Interacts with PPP1R16B. Interacts with SPHK1 and SPHK2; both interactions increase SPHK1 and SPHK2 kinase activity. Interacts with guanyl-nucleotide exchange factor EEF1B2. Interacts (via middle-region) with HTATIP2 (via N-terminus); the interaction is direct and competes with EEF1A1 binding to guanyl-nucleotide exchange factor EEF1B2, thereby inhibiting GDP for GTP exchange and reactivation of EEF1A1. Interacts with tRNA. ISGylated. Post-translationally, phosphorylated by TXK. Phosphorylation by PASK increases translation efficiency. Phosphorylated by ROCK2. Phosphorylation by TGFBR1 inhibits translation elongation. In terms of processing, trimethylated at Lys-79 by EEF1AKMT1. Methylated at Lys-165 by EEF1AKMT3, methylation by EEF1AKMT3 is dynamic as well as inducible by stress conditions, such as ER-stress, and plays a regulatory role on mRNA translation. Trimethylated at Lys-318 by EEF1AKMT2. Mono-, di-, and trimethylated at Lys-36 by EEF1AKMT4; trimethylated form is predominant. Methylation by EEF1AKMT4 contributes to the fine-tuning of translation rates for a subset of tRNAs. Trimethylated at Gly-2 by METTL13. Mono- and dimethylated at Lys-55 by METTL13; dimethylated form is predominant. Ubiquitinated at Lys-385 by RNF14 in response to ribosome collisions (ribosome stalling), leading to its degradation by the proteasome and rescue of stalled ribosomes.

It localises to the cytoplasm. Its subcellular location is the nucleus. The protein localises to the nucleolus. It is found in the cell membrane. The catalysed reaction is GTP + H2O = GDP + phosphate + H(+). Translation elongation factor that catalyzes the GTP-dependent binding of aminoacyl-tRNA (aa-tRNA) to the A-site of ribosomes during the elongation phase of protein synthesis. Base pairing between the mRNA codon and the aa-tRNA anticodon promotes GTP hydrolysis, releasing the aa-tRNA from EEF1A1 and allowing its accommodation into the ribosome. The growing protein chain is subsequently transferred from the P-site peptidyl tRNA to the A-site aa-tRNA, extending it by one amino acid through ribosome-catalyzed peptide bond formation. Also plays a role in the positive regulation of IFNG transcription in T-helper 1 cells as part of an IFNG promoter-binding complex with TXK and PARP1. Also plays a role in cytoskeleton organization by promoting actin bundling. This is Elongation factor 1-alpha 1 (EEF1A1) from Cricetulus griseus (Chinese hamster).